Reading from the N-terminus, the 148-residue chain is Putative ankyrin repeat protein RF_1158 (148 aa).

One copy of the ANK repeat lies at 82 to 115; it reads RPTTALGIAIAQGNSEEVIKYLLANGADPKLAFD.

The chain is Putative ankyrin repeat protein RF_1158 from Rickettsia felis (strain ATCC VR-1525 / URRWXCal2) (Rickettsia azadi).